Consider the following 961-residue polypeptide: IQ motif and SEC7 domain-containing protein 1 (961 aa).

A disordered region spans residues 21 to 113; it reads SGVEGEAPSS…SLSESYELSS (93 aa). Over residues 29–38 the composition is skewed to polar residues; sequence SSETGTSLDS. Ser-88, Ser-104, and Ser-106 each carry phosphoserine. An IQ domain is found at 133-162; it reads TRHAARTIQTAFRQYQMNKNFERLRSSMSE. Ser-179, Ser-247, and Ser-251 each carry phosphoserine. Disordered regions lie at residues 263-291, 310-332, and 347-515; these read SEEVPASDTARARDTEPKPGLHGMDHRKL, LSPPLPLSQAGDRPSSTESDLRL, and KEDK…DSPA. The segment covering 272-291 has biased composition (basic and acidic residues); the sequence is ARARDTEPKPGLHGMDHRKL. 2 stretches are compositionally biased toward basic and acidic residues: residues 364 to 374 and 428 to 444; these read ERPEPRLRVEH and LPREEPELRPRPPRPLE. Low complexity predominate over residues 469-487; the sequence is DSINSTSNSNDTINCSSES. Ser-510 and Ser-513 each carry phosphoserine. The region spanning 515–708 is the SEC7 domain; it reads AFSNDVIRKR…IGIYERIRKR (194 aa). The PH domain maps to 772–864; that stretch reads HQREIFLFND…LRESVAEVQE (93 aa). Residues 846 to 877 are a coiled coil; sequence QDRKKFTDDLRESVAEVQEMEKHRIESELEKQ. Phosphoserine is present on Ser-890. A Phosphotyrosine modification is found at Tyr-909. A disordered region spans residues 920–961; that stretch reads LSSSLRDLSEAGKRGRRSSAGSLESNVEFQPFQPPQPPVLCS. Phosphoserine is present on residues Ser-922 and Ser-923. A compositionally biased stretch (polar residues) spans 938–947; sequence SAGSLESNVE. Positions 951–961 are enriched in pro residues; that stretch reads FQPPQPPVLCS.

The protein belongs to the BRAG family. In terms of assembly, interacts with ARF1 and ARF6. Interacts with GRIA2; the interaction is required for ARF6 activation. In terms of tissue distribution, expressed in hippocampus.

The protein localises to the cytoplasm. It localises to the nucleus. Its subcellular location is the postsynaptic density. The protein resides in the cytoplasmic vesicle. It is found in the secretory vesicle. The protein localises to the synaptic vesicle. Guanine nucleotide exchange factor for ARF1 and ARF6. Guanine nucleotide exchange factor activity is enhanced by lipid binding. Accelerates GTP binding by ARFs of all three classes. Guanine nucleotide exchange protein for ARF6, mediating internalization of beta-1 integrin. Involved in neuronal development. In neurons, plays a role in the control of vesicle formation by endocytoc cargo. Upon long term depression, interacts with GRIA2 and mediates the activation of ARF6 to internalize synaptic AMPAR receptors. The chain is IQ motif and SEC7 domain-containing protein 1 (Iqsec1) from Mus musculus (Mouse).